The following is a 186-amino-acid chain: Cytochrome c oxidase subunit 4, mitochondrial (186 aa).

A mitochondrion-targeting transit peptide spans 1–31 (MLLSRTAVAVARRATAAPALRRSIATTVVRC). Zn(2+) is bound by residues Cys-118, His-126, Cys-142, and Cys-145.

This sequence belongs to the cytochrome c oxidase subunit 5B family. Component of the cytochrome c oxidase (complex IV, CIV), a multisubunit enzyme composed of 11 subunits. The complex is composed of a catalytic core of 3 subunits Cox1, Cox2 and Cox3, encoded in the mitochondrial DNA, and 8 supernumerary subunits Cox4, Cox5a/Cox5, Cox6, Cox7, Cox8, Cox7a/Cox9, Cox6b/Cox12 and Cox6a/Cox13, which are encoded in the nuclear genome. The complex exists as a monomer or a dimer and forms respiratory supercomplexes (SCs) in the inner mitochondrial membrane with NADH-ubiquinone oxidoreductase (complex I, CI) and ubiquinol-cytochrome c oxidoreductase (cytochrome b-c1 complex, complex III, CIII), resulting in various different assemblies (supercomplexes I(1)IV(1), I(1)III(3)IV(2), III(2)IV(1) and III(2)IV(2) as well as larger supercomplexes of compositions like I(1)III(2)IV(5-6)).

The protein resides in the mitochondrion inner membrane. The protein operates within energy metabolism; oxidative phosphorylation. In terms of biological role, component of the cytochrome c oxidase, the last enzyme in the mitochondrial electron transport chain which drives oxidative phosphorylation. The respiratory chain contains 3 multisubunit complexes succinate dehydrogenase (complex II, CII), ubiquinol-cytochrome c oxidoreductase (cytochrome b-c1 complex, complex III, CIII) and cytochrome c oxidase (complex IV, CIV), that cooperate to transfer electrons derived from NADH and succinate to molecular oxygen, creating an electrochemical gradient over the inner membrane that drives transmembrane transport and the ATP synthase. Cytochrome c oxidase is the component of the respiratory chain that catalyzes the reduction of oxygen to water. Electrons originating from reduced cytochrome c in the intermembrane space (IMS) are transferred via the dinuclear copper A center (CU(A)) of Cox2 and heme A of Cox1 to the active site in Cox1, a binuclear center (BNC) formed by heme A3 and copper B (CU(B)). The BNC reduces molecular oxygen to 2 water molecules using 4 electrons from cytochrome c in the IMS and 4 protons from the mitochondrial matrix. The chain is Cytochrome c oxidase subunit 4, mitochondrial (cox-4) from Neurospora crassa (strain ATCC 24698 / 74-OR23-1A / CBS 708.71 / DSM 1257 / FGSC 987).